We begin with the raw amino-acid sequence, 170 residues long: Ribosome maturation factor RimM (170 aa).

In terms of domain architecture, PRC barrel spans 98–170 (PDEYYWVDLE…LIVVDWDPDF (73 aa)).

Belongs to the RimM family. As to quaternary structure, binds ribosomal protein uS19.

It is found in the cytoplasm. In terms of biological role, an accessory protein needed during the final step in the assembly of 30S ribosomal subunit, possibly for assembly of the head region. Essential for efficient processing of 16S rRNA. May be needed both before and after RbfA during the maturation of 16S rRNA. It has affinity for free ribosomal 30S subunits but not for 70S ribosomes. The chain is Ribosome maturation factor RimM from Xanthomonas campestris pv. campestris (strain 8004).